The sequence spans 479 residues: uncharacterized protein (479 aa).

The next 10 helical transmembrane spans lie at 11 to 31 (ILMA…LSLI), 43 to 63 (IVGL…AIAV), 90 to 110 (GTTW…ITGL), 151 to 171 (SGGI…SDPE), 195 to 215 (IFLT…PILG), 223 to 243 (WFLA…LICY), 274 to 294 (KALS…NSLH), 295 to 315 (INAT…SIVT), 328 to 348 (TLVW…SGFF), and 447 to 467 (WWIT…TIGM).

This sequence belongs to the SLC13A/DASS transporter (TC 2.A.47) family. DIT1 subfamily.

It localises to the cell inner membrane. This is an uncharacterized protein from Haemophilus influenzae (strain ATCC 51907 / DSM 11121 / KW20 / Rd).